We begin with the raw amino-acid sequence, 1849 residues long: Protein TANC1 (1849 aa).

M1 is modified (N-acetylmethionine). Disordered stretches follow at residues M1–D47 and M59–G109. Residues K8 to G21 show a composition bias toward basic and acidic residues. Residues E27–E46 show a composition bias toward polar residues. 6 positions are modified to phosphoserine: S60, S63, S64, S204, S267, and S455. Disordered regions lie at residues D264 to N309 and V430 to R481. The segment covering T451–T468 has biased composition (low complexity). 11 ANK repeats span residues E886–Y918, N924–G953, N957–H986, K990–P1019, A1030–I1059, W1068–R1097, R1101–P1130, Q1134–S1163, E1167–Q1196, N1200–H1229, and S1233–N1262. 3 TPR repeats span residues L1279 to E1312, V1326 to S1359, and E1361 to N1393. Low complexity predominate over residues L1410–P1421. Disordered stretches follow at residues L1410–S1503, N1527–G1605, Q1635–T1711, and P1812–V1849. 2 positions are modified to phosphoserine: S1429 and S1456. Residues E1447 to S1456 are compositionally biased toward acidic residues. Composition is skewed to polar residues over residues N1527–V1546 and P1593–E1603. Positions S1649–S1679 are enriched in low complexity. Phosphoserine occurs at positions 1658, 1666, and 1667.

This sequence belongs to the TANC family. In terms of assembly, interacts probably directly with DLG1, DLG4, HOMER1. Interacts with DLGAP1, INA, CAMK2A, GRIN2B and GRIA1. Interacts with TNIK and MINK1. Post-translationally, phosphorylated; by MINK1 and TNIK upon stimulation by RAP2A. In terms of tissue distribution, expressed in heart, lung, liver and kidney. Expressed in brain (at protein level).

It localises to the postsynaptic density. Functionally, may be a scaffold component in the postsynaptic density. The protein is Protein TANC1 (Tanc1) of Rattus norvegicus (Rat).